We begin with the raw amino-acid sequence, 144 residues long: Group IID secretory phospholipase A2 (144 aa).

The signal sequence occupies residues 1–19; it reads MRLALLCGLLLAGITATQG. Intrachain disulfides connect Cys45–Cys137, Cys47–Cys63, Cys62–Cys117, Cys68–Cys144, Cys69–Cys110, Cys78–Cys103, and Cys96–Cys108. 3 residues coordinate Ca(2+): His46, Gly48, and Gly50. The active site involves His66. Asp67 contacts Ca(2+). The N-linked (GlcNAc...) asparagine glycan is linked to Asn99. Residue Asp111 is part of the active site.

This sequence belongs to the phospholipase A2 family. Ca(2+) serves as cofactor. Highly expressed in secondary lymphoid tissues, spleen and lymph nodes. Expressed at a lesser extent in thymus. Expressed in CD4-positive, IL2RA/CD25-positive, FOXP3-positive Tregs (at protein level). Expressed in myeloid cell subsets resident in spleen and lymph nodes, ITGAX/CD11C-positive dendritic cells and macrophages (at protein level). Enriched in CD4-positive, ITGAM/CD11B-positive dendritic cell subset. Expressed in pulmonary ITGAX/CD11C-positive dendritic cell subset (at protein level).

It localises to the secreted. The protein resides in the cell membrane. Its subcellular location is the cytoplasm. It carries out the reaction a 1,2-diacyl-sn-glycero-3-phosphoethanolamine + H2O = a 1-acyl-sn-glycero-3-phosphoethanolamine + a fatty acid + H(+). The catalysed reaction is 1-hexadecanoyl-2-(9Z-octadecenoyl)-sn-glycero-3-phosphoethanolamine + H2O = 1-hexadecanoyl-sn-glycero-3-phosphoethanolamine + (9Z)-octadecenoate + H(+). The enzyme catalyses 1-hexadecanoyl-2-(9Z,12Z-octadecadienoyl)-sn-glycero-3-phosphoethanolamine + H2O = 1-hexadecanoyl-sn-glycero-3-phosphoethanolamine + (9Z,12Z)-octadecadienoate + H(+). It catalyses the reaction 1,2-dihexadecanoyl-sn-glycero-3-phospho-(1'-sn-glycerol) + H2O = 1-hexadecanoyl-sn-glycero-3-phospho-(1'-sn-glycerol) + hexadecanoate + H(+). It carries out the reaction 1-hexadecanoyl-2-(9Z-octadecenoyl)-sn-glycero-3-phospho-(1'-sn-glycerol) + H2O = 1-hexadecanoyl-sn-glycero-3-phospho-(1'-sn-glycerol) + (9Z)-octadecenoate + H(+). The catalysed reaction is a 1,2-diacyl-sn-glycero-3-phosphocholine + H2O = a 1-acyl-sn-glycero-3-phosphocholine + a fatty acid + H(+). The enzyme catalyses 1,2-dihexadecanoyl-sn-glycero-3-phosphocholine + H2O = 1-hexadecanoyl-sn-glycero-3-phosphocholine + hexadecanoate + H(+). It catalyses the reaction 1-hexadecanoyl-2-(9Z-octadecenoyl)-sn-glycero-3-phosphocholine + H2O = 1-hexadecanoyl-sn-glycero-3-phosphocholine + (9Z)-octadecenoate + H(+). It carries out the reaction 1-hexadecanoyl-2-(9Z,12Z-octadecadienoyl)-sn-glycero-3-phosphocholine + H2O = (9Z,12Z)-octadecadienoate + 1-hexadecanoyl-sn-glycero-3-phosphocholine + H(+). The catalysed reaction is 1-hexadecanoyl-2-(4Z,7Z,10Z,13Z,16Z,19Z-docosahexaenoyl)-sn-glycero-3-phosphocholine + H2O = (4Z,7Z,10Z,13Z,16Z,19Z)-docosahexaenoate + 1-hexadecanoyl-sn-glycero-3-phosphocholine + H(+). Secretory calcium-dependent phospholipase A2 that primarily targets extracellular lipids, exerting anti-inflammatory and immunosuppressive functions. Hydrolyzes the ester bond of the fatty acyl group attached at sn-2 position of phospholipids (phospholipase A2 activity) with preference for phosphatidylethanolamines and phosphatidylglycerols over phosphatidylcholines. In draining lymph nodes, selectively hydrolyzes diacyl and alkenyl forms of phosphatidylethanolamines, releasing omega-3 polyunsaturated fatty acids (PUFAs) such as eicosapentaenoate and docosahexaenoate that are precursors of the anti-inflammatory lipid mediators, resolvins. During the resolution phase of acute inflammation drives docosahexaenoate-derived resolvin D1 synthesis, which suppresses dendritic cell activation and T-helper 1 immune response. May act in an autocrine and paracrine manner. Via a mechanism independent of its catalytic activity, promotes differentiation of regulatory T cells (Tregs) and participates in the maintenance of immune tolerance. May contribute to lipid remodeling of cellular membranes and generation of lipid mediators involved in pathogen clearance. Displays bactericidal activity against Gram-positive bacteria by directly hydrolyzing phospholipids of the bacterial membrane. This is Group IID secretory phospholipase A2 (Pla2g2d) from Mus musculus (Mouse).